A 308-amino-acid chain; its full sequence is Shikimate kinase 1, chloroplastic (308 aa).

The transit peptide at 1–62 directs the protein to the chloroplast; sequence MEAGVGLALQ…RGSKPVAPLR (62 aa). 103–110 lines the ATP pocket; it reads GMMGSGKS. Ser-110 provides a ligand contact to Mg(2+). Substrate contacts are provided by Asp-128, Arg-153, and Gly-175. Arg-214 serves as a coordination point for ATP.

Belongs to the shikimate kinase family. Mg(2+) is required as a cofactor. In terms of tissue distribution, expressed in panicles.

The protein resides in the plastid. Its subcellular location is the chloroplast. The catalysed reaction is shikimate + ATP = 3-phosphoshikimate + ADP + H(+). The protein operates within metabolic intermediate biosynthesis; chorismate biosynthesis; chorismate from D-erythrose 4-phosphate and phosphoenolpyruvate: step 5/7. Functionally, catalyzes the specific phosphorylation of the 3-hydroxyl group of shikimic acid using ATP as a cosubstrate. The chain is Shikimate kinase 1, chloroplastic (SK1) from Oryza sativa subsp. japonica (Rice).